A 312-amino-acid polypeptide reads, in one-letter code: Ribosomal protein L11 methyltransferase (312 aa).

Thr160, Gly181, Asp203, and Asn246 together coordinate S-adenosyl-L-methionine.

The protein belongs to the methyltransferase superfamily. PrmA family.

Its subcellular location is the cytoplasm. The catalysed reaction is L-lysyl-[protein] + 3 S-adenosyl-L-methionine = N(6),N(6),N(6)-trimethyl-L-lysyl-[protein] + 3 S-adenosyl-L-homocysteine + 3 H(+). In terms of biological role, methylates ribosomal protein L11. The chain is Ribosomal protein L11 methyltransferase from Staphylococcus aureus (strain JH1).